Consider the following 1104-residue polypeptide: Lon protease homolog, mitochondrial (1104 aa).

The N-terminal 58 residues, 1–58 (MLPLRAFARLAQRPRLSRPTQLARSSLPRPSPSRPAAHYLALAPAPSTRFLHSSPPVL), are a transit peptide targeting the mitochondrion. Disordered regions lie at residues 8–144 (ARLA…KEVA) and 275–295 (EGSQDSAKGEGEVKSFESEVP). A compositionally biased stretch (low complexity) spans 22–46 (LARSSLPRPSPSRPAAHYLALAPAP). Positions 80-103 (KQDDQVEKPLPDAESSKSAEERAK) are enriched in basic and acidic residues. A compositionally biased stretch (low complexity) spans 104–128 (SQSSKPDIKASSSDSVSSSAPAPGS). The segment covering 129-139 (ADGGSPPGAGG) has biased composition (gly residues). Residues 155 to 444 (VLAIPITHRP…RALVLLKKEL (290 aa)) enclose the Lon N-terminal domain. Basic and acidic residues predominate over residues 281-291 (AKGEGEVKSFE). Position 597–604 (597–604 (GPPGVGKT)) interacts with ATP. One can recognise a Lon proteolytic domain in the interval 895–1082 (SPPAGVSTGL…RQVLHEAFRG (188 aa)). Residues serine 987 and lysine 1030 contribute to the active site.

It belongs to the peptidase S16 family. Homohexamer or homoheptamer. Organized in a ring with a central cavity.

It localises to the mitochondrion matrix. The catalysed reaction is Hydrolysis of proteins in presence of ATP.. Functionally, ATP-dependent serine protease that mediates the selective degradation of misfolded, unassembled or oxidatively damaged polypeptides as well as certain short-lived regulatory proteins in the mitochondrial matrix. May also have a chaperone function in the assembly of inner membrane protein complexes. Participates in the regulation of mitochondrial gene expression and in the maintenance of the integrity of the mitochondrial genome. Binds to mitochondrial DNA in a site-specific manner. This is Lon protease homolog, mitochondrial from Cryptococcus neoformans var. neoformans serotype D (strain JEC21 / ATCC MYA-565) (Filobasidiella neoformans).